The following is a 313-amino-acid chain: Porphobilinogen deaminase (313 aa).

Cys242 carries the post-translational modification S-(dipyrrolylmethanemethyl)cysteine.

Belongs to the HMBS family. As to quaternary structure, monomer. It depends on dipyrromethane as a cofactor.

It catalyses the reaction 4 porphobilinogen + H2O = hydroxymethylbilane + 4 NH4(+). It participates in porphyrin-containing compound metabolism; protoporphyrin-IX biosynthesis; coproporphyrinogen-III from 5-aminolevulinate: step 2/4. Tetrapolymerization of the monopyrrole PBG into the hydroxymethylbilane pre-uroporphyrinogen in several discrete steps. This is Porphobilinogen deaminase from Yersinia pestis bv. Antiqua (strain Angola).